We begin with the raw amino-acid sequence, 411 residues long: MVHKKKNVDIPSSQKYLGIQHVNFYSNAFGKESLRFQLRELILPIVRKETRLLYKIQSFFRNPWLDVYFMYTATLGTHVFFMLALPIFFWSGCIYYTLDITQLFAAGVYFSGCIKDYFCLPRPRSPPMVRLTLSSDAEYEYGFPSTHTTNAMATGFYSLFLLLSMSDSMSSISYYFLLSLVLLYIASISLGRIYCGMHGFMDVSTGTILGVTLAIFQWKYADFFHNVWSSSSTSVPILSVVLALFFIWFHPQPAERCICLEDSISFISVIMGIDLGTWFASPESLSHLHDNLNSYFLLKFFVRVLFGVCMILIWKSFAKQALLAVLPPIFKSLRLSYLEPKSQSEKGIRAATGSNHSPGNIGTELGVITSHQSHPHPVRFDIETIARIIVYSGIGFLCTYFAPKVFLKWKI.

At Met-1–Thr-74 the chain is on the lumenal side. Residues Leu-75 to Tyr-95 traverse the membrane as a helical segment. Residues Tyr-96–Asp-99 lie on the Cytoplasmic side of the membrane. The helical transmembrane segment at Ile-100–Leu-120 threads the bilayer. Residues Lys-115 to Pro-123 form a phosphatase sequence motif I region. The Lumenal segment spans residues Pro-121–Ser-170. Positions Pro-144–His-147 are phosphatase sequence motif II. Residue His-147 is the Proton donor of the active site. The helical transmembrane segment at Ser-171–Gly-191 threads the bilayer. The phosphatase sequence motif III stretch occupies residues Gly-191–Asp-202. Residues Arg-192–Cys-195 are Cytoplasmic-facing. Residues Gly-196–Phe-216 form a helical membrane-spanning segment. His-198 (nucleophile) is an active-site residue. The Lumenal segment spans residues Gln-217–Thr-233. Residues Ser-234–Ala-254 traverse the membrane as a helical segment. Topologically, residues Glu-255 to Cys-259 are cytoplasmic. A helical membrane pass occupies residues Leu-260 to Ala-280. The Lumenal segment spans residues Ser-281–Asn-293. A helical transmembrane segment spans residues Ser-294 to Trp-314. At Lys-315–Arg-387 the chain is on the cytoplasmic side. A helical membrane pass occupies residues Ile-388–Lys-408. Topologically, residues Trp-409–Ile-411 are lumenal.

The protein belongs to the type 2 lipid phosphate phosphatase family.

The protein resides in the endoplasmic reticulum membrane. In terms of biological role, dihydrosphingosine 1-phosphate phosphatase required for efficient ceramide synthesis from exogenous sphingoid bases. Involved in endocytosis and calcium-mediated signaling. This Schizosaccharomyces pombe (strain 972 / ATCC 24843) (Fission yeast) protein is Dihydrosphingosine 1-phosphate phosphatase C823.11.